The following is a 197-amino-acid chain: Na(+)-translocating NADH-quinone reductase subunit E (197 aa).

6 helical membrane passes run 11–31 (SVFIENMALSFFLGMCTFLAV), 35–55 (VSTAFGLGVAVIFVLGLSVPV), 76–96 (FLKFITFIGVIAALVQILEMF), 108–128 (LGIYLPLITVNCAIFGAVSFM), 139–159 (VVYGFGAGLGWMLAIVALAGI), and 175–195 (LGITFIAAGLMAMAFMSFSGI).

Belongs to the NqrDE/RnfAE family. As to quaternary structure, composed of six subunits; NqrA, NqrB, NqrC, NqrD, NqrE and NqrF.

Its subcellular location is the cell inner membrane. It carries out the reaction a ubiquinone + n Na(+)(in) + NADH + H(+) = a ubiquinol + n Na(+)(out) + NAD(+). In terms of biological role, NQR complex catalyzes the reduction of ubiquinone-1 to ubiquinol by two successive reactions, coupled with the transport of Na(+) ions from the cytoplasm to the periplasm. NqrA to NqrE are probably involved in the second step, the conversion of ubisemiquinone to ubiquinol. The protein is Na(+)-translocating NADH-quinone reductase subunit E of Neisseria meningitidis serogroup B (strain ATCC BAA-335 / MC58).